The primary structure comprises 596 residues: Protein NRT1/ PTR FAMILY 3.1 (596 aa).

The segment covering 1-16 has biased composition (basic and acidic residues); it reads MEEQSKNKISEEEKQL. A disordered region spans residues 1–23; it reads MEEQSKNKISEEEKQLHGRPNRP. 12 helical membrane passes run 27–47, 73–93, 98–118, 137–157, 185–205, 213–233, 334–354, 372–392, 416–436, 453–473, 497–517, and 542–562; these read LITMPFIFANEICEKLAVVGF, FAGTSSLTPLLGAFIADSFAG, ITFASIIYQIGMTLLTISAII, TAQLSILYVALLLGALGSGGI, NWYYFCMGAAVLLAVTVLVWI, LGLGIPTVAMFLSVIAFVGGF, MGPIGASGILLITAYAQQGTF, IPAGSMSVFTTVAMLTTIIFY, MGIGFVISIIATLVAGFVEVK, IVPISFLWLIPQYGLHGVAEA, ALFWMAISIGNYVSTLLVTLV, and YFYWLITVLQAVNLVYYLWCA.

The protein belongs to the major facilitator superfamily. Proton-dependent oligopeptide transporter (POT/PTR) (TC 2.A.17) family. In terms of tissue distribution, expressed in shoots, stems, leaves, flowers and siliques.

It localises to the membrane. In terms of biological role, may act as an efflux-type nitrite transporter. Not regulated by the PII protein involved in the regulation of nitrite uptake into higher plant chloroplasts. The chain is Protein NRT1/ PTR FAMILY 3.1 (NPF3.1) from Arabidopsis thaliana (Mouse-ear cress).